A 70-amino-acid chain; its full sequence is Biotin carboxyl carrier protein of acetyl-CoA carboxylase (70 aa).

In terms of domain architecture, Biotinyl-binding spans 1 to 69; sequence GTVVAPMVGL…QDGIKLFALK (69 aa). Residue lysine 35 is modified to N6-biotinyllysine.

It is found in the plastid. The protein resides in the chloroplast. The protein operates within lipid metabolism; fatty acid biosynthesis. Its function is as follows. This protein is a component of the acetyl coenzyme A carboxylase complex; first, biotin carboxylase catalyzes the carboxylation of the carrier protein and then the transcarboxylase transfers the carboxyl group to form malonyl-CoA. In Solanum lycopersicum (Tomato), this protein is Biotin carboxyl carrier protein of acetyl-CoA carboxylase.